Consider the following 362-residue polypeptide: Phosphoserine aminotransferase (362 aa).

Residue R43 coordinates L-glutamate. Pyridoxal 5'-phosphate is bound by residues 77–78 (AR), W103, T153, D173, and Q196. K197 is modified (N6-(pyridoxal phosphate)lysine).

Belongs to the class-V pyridoxal-phosphate-dependent aminotransferase family. SerC subfamily. Homodimer. Pyridoxal 5'-phosphate serves as cofactor.

The protein localises to the cytoplasm. It catalyses the reaction O-phospho-L-serine + 2-oxoglutarate = 3-phosphooxypyruvate + L-glutamate. It carries out the reaction 4-(phosphooxy)-L-threonine + 2-oxoglutarate = (R)-3-hydroxy-2-oxo-4-phosphooxybutanoate + L-glutamate. It functions in the pathway amino-acid biosynthesis; L-serine biosynthesis; L-serine from 3-phospho-D-glycerate: step 2/3. It participates in cofactor biosynthesis; pyridoxine 5'-phosphate biosynthesis; pyridoxine 5'-phosphate from D-erythrose 4-phosphate: step 3/5. Catalyzes the reversible conversion of 3-phosphohydroxypyruvate to phosphoserine and of 3-hydroxy-2-oxo-4-phosphonooxybutanoate to phosphohydroxythreonine. This Legionella pneumophila (strain Corby) protein is Phosphoserine aminotransferase.